We begin with the raw amino-acid sequence, 216 residues long: HTH-type transcriptional regulator EthR (216 aa).

Over residues 1–10 (MTTSAASQAS) the composition is skewed to polar residues. A disordered region spans residues 1–24 (MTTSAASQASLPRGRRTARPSGDD). Residues 23-83 (DDRELAILAT…TLLDRVVNQA (61 aa)) form the HTH tetR-type domain. Residues 46 to 65 (SVDDLAKGAGISRPTFYFYF) constitute a DNA-binding region (H-T-H motif).

As to quaternary structure, homodimer.

Involved in the repression of the monooxygenase EthA which is responsible of the formation of the active metabolite of ethionamide (ETH). The sequence is that of HTH-type transcriptional regulator EthR (ethR) from Mycobacterium bovis (strain ATCC BAA-935 / AF2122/97).